Consider the following 378-residue polypeptide: MAHKAPSVITCKAAVVWELGGPVVLEEIKVDPPKASEVRIKMLCASICHTDVLCTKGFPIPLFPRIPGHEGVGVIESVGIDAKGLKPGDIVMPLYLGECGQCLNCKTGKTNLCHVYPPPFSGLMNDGTSRMTIARTGESIYHFTSCSTWTEYAVADCNYVLKIDPKISYPHASFLSCGFTTGFGATWRETQVSKGSSVAVFGIGTVGLGVIKGAQLAGASKIIGVDVNQYKAAKGKVFGMTDFINPKDHPNKTVSELVKEITHGLGVDYCFECTGVPSLLNEALEASKFGIGTVVPIGAGGEASVAINSLILFSGRTLKCTTFGGVRTQSDLPVIIDKCLNKEIQLDELLTHEIQLENIQAAFEILKKPDCVKILINF.

Cys-48 provides a ligand contact to Zn(2+). 49–53 is an NAD(+) binding site; the sequence is HTDVL. Positions 69, 99, 102, 105, 113, and 177 each coordinate Zn(2+). NAD(+)-binding positions include 202 to 207, Asp-226, Lys-231, 274 to 276, 297 to 299, and 321 to 323; these read GIGTVG, TGV, IGA, and TTF.

It belongs to the zinc-containing alcohol dehydrogenase family. Class-IV subfamily. Homodimer. It depends on Zn(2+) as a cofactor. As to expression, expressed in flowers and disk florets.

Its pathway is isoprenoid biosynthesis. This is Alcohol dehydrogenase 1 from Tanacetum cinerariifolium (Dalmatian daisy).